The chain runs to 129 residues: MAREATRIRRRERKNITSGIVHVNSSFNNTMVTITDAQGNTISWSSSGVMNFKGSRKSTPYAAQMAAEDAAKKAKEHGLQTVEVRVRGPGSGRESALRALQAAGLTVTAINDTTPIPHNGCRPPKRRRV.

This sequence belongs to the universal ribosomal protein uS11 family. In terms of assembly, part of the 30S ribosomal subunit. Interacts with proteins S7 and S18. Binds to IF-3.

Located on the platform of the 30S subunit, it bridges several disparate RNA helices of the 16S rRNA. Forms part of the Shine-Dalgarno cleft in the 70S ribosome. This chain is Small ribosomal subunit protein uS11, found in Hyphomonas neptunium (strain ATCC 15444).